The following is a 350-amino-acid chain: Small-conductance mechanosensitive channel MscMJ (350 aa).

5 consecutive transmembrane segments (helical) span residues 10-30, 59-79, 91-111, 130-150, and 154-174; these read ISNI…GKIV, LPII…FLIL, VKVV…DGIF, IIKP…ILTA, and VGYD…ALAL.

It belongs to the MscS (TC 1.A.23) family.

The protein resides in the cell membrane. Functionally, small-conductance mechanosensitive channel that opens in response to stretch forces in the membrane lipid bilayer. Exhibits a sixfold preference for cations over anions. Non-rectifying. In Methanocaldococcus jannaschii (strain ATCC 43067 / DSM 2661 / JAL-1 / JCM 10045 / NBRC 100440) (Methanococcus jannaschii), this protein is Small-conductance mechanosensitive channel MscMJ.